The primary structure comprises 367 residues: Alanine racemase (367 aa).

The active-site Proton acceptor; specific for D-alanine is Lys40. The residue at position 40 (Lys40) is an N6-(pyridoxal phosphate)lysine. Residue Arg136 coordinates substrate. Tyr263 functions as the Proton acceptor; specific for L-alanine in the catalytic mechanism. Residue Met310 coordinates substrate.

This sequence belongs to the alanine racemase family. The cofactor is pyridoxal 5'-phosphate.

It catalyses the reaction L-alanine = D-alanine. It functions in the pathway amino-acid biosynthesis; D-alanine biosynthesis; D-alanine from L-alanine: step 1/1. In terms of biological role, catalyzes the interconversion of L-alanine and D-alanine. May also act on other amino acids. The polypeptide is Alanine racemase (alr) (Lactococcus lactis subsp. cremoris (strain SK11)).